Consider the following 157-residue polypeptide: Probable intracellular pathogenesis-related protein T1 (157 aa).

N-linked (GlcNAc...) asparagine glycans are attached at residues Asn-79 and Asn-117.

The protein belongs to the BetVI family.

This is Probable intracellular pathogenesis-related protein T1 (PCKR3) from Catharanthus roseus (Madagascar periwinkle).